A 555-amino-acid polypeptide reads, in one-letter code: Vetispiradiene synthase 1 (555 aa).

Mg(2+)-binding residues include Asp308, Asp312, Asp451, Thr455, and Glu459. Residues 308–312 carry the DDXXD motif motif; it reads DDTFD.

Belongs to the terpene synthase family. Tpsa subfamily. Mg(2+) is required as a cofactor.

It localises to the cytoplasm. It catalyses the reaction (2E,6E)-farnesyl diphosphate = (-)-vetispiradiene + diphosphate. Its pathway is secondary metabolite biosynthesis; terpenoid biosynthesis. Its function is as follows. Sesquiterpene synthase that catalyzes the formation of vetispiradiene from trans,trans-farnesyl diphosphate. The initial internal cyclization produces the monocyclic intermediate germacrene A. This Hyoscyamus muticus (Egyptian henbane) protein is Vetispiradiene synthase 1.